Here is a 425-residue protein sequence, read N- to C-terminus: UDP-N-acetylglucosamine 1-carboxyvinyltransferase (425 aa).

Position 25–26 (25–26) interacts with phosphoenolpyruvate; the sequence is KN. Position 95 (R95) interacts with UDP-N-acetyl-alpha-D-glucosamine. The Proton donor role is filled by C119. C119 is subject to 2-(S-cysteinyl)pyruvic acid O-phosphothioketal. Residues 124 to 128, D306, and I328 contribute to the UDP-N-acetyl-alpha-D-glucosamine site; that span reads RPVDQ.

Belongs to the EPSP synthase family. MurA subfamily.

Its subcellular location is the cytoplasm. The enzyme catalyses phosphoenolpyruvate + UDP-N-acetyl-alpha-D-glucosamine = UDP-N-acetyl-3-O-(1-carboxyvinyl)-alpha-D-glucosamine + phosphate. Its pathway is cell wall biogenesis; peptidoglycan biosynthesis. Cell wall formation. Adds enolpyruvyl to UDP-N-acetylglucosamine. This Thermus thermophilus (strain ATCC 27634 / DSM 579 / HB8) protein is UDP-N-acetylglucosamine 1-carboxyvinyltransferase.